We begin with the raw amino-acid sequence, 432 residues long: Glutamyl-tRNA reductase (432 aa).

Substrate-binding positions include 50-53 (TCNR), Ser110, 115-117 (ETQ), and Gln121. The active-site Nucleophile is Cys51. 190 to 195 (GAGEMG) provides a ligand contact to NADP(+).

This sequence belongs to the glutamyl-tRNA reductase family. As to quaternary structure, homodimer.

The enzyme catalyses (S)-4-amino-5-oxopentanoate + tRNA(Glu) + NADP(+) = L-glutamyl-tRNA(Glu) + NADPH + H(+). It functions in the pathway porphyrin-containing compound metabolism; protoporphyrin-IX biosynthesis; 5-aminolevulinate from L-glutamyl-tRNA(Glu): step 1/2. In terms of biological role, catalyzes the NADPH-dependent reduction of glutamyl-tRNA(Glu) to glutamate 1-semialdehyde (GSA). The chain is Glutamyl-tRNA reductase from Nitratiruptor sp. (strain SB155-2).